The following is a 401-amino-acid chain: NADH-dependent flavin oxidoreductase iliE (401 aa).

FMN contacts are provided by residues 25-28 (ASMS) and Gln-107. 188-191 (HAAH) contacts substrate. Residue 346–347 (AR) participates in FMN binding.

This sequence belongs to the NADH:flavin oxidoreductase/NADH oxidase family.

In terms of biological role, NADH-dependent flavin oxidoreductase; part of the gene cluster that mediates the biosynthesis of ilicicolin H, a 4-hydroxy-2-pyridonealkaloid that has potent and broad antifungal activities by inhibiting the mitochondrial respiration chain. The biosynthesis of ilicicolin H starts with formation of the tetramic acid by the hybrid PKS-NRPS synthetase iliA with the partnering trans-enoyl reductase iliB since iliA lacks a designated enoylreductase (ER) domain. The cytochrome P450 monooxygenase iliC then catalyzes the ring expansion of the tetramate to the acyclic 2-pyridone. The pericyclase iliD further converts the acyclic 2-pyridone into 8-epi-ilicicolin H. 8-epi-ilicicolin H might then spontaneously convert to ilicicolin H since ilicicolin H is produced in the absence of the epimerase iliE, in contrast to what was observed for the Talaromyces variabilis ilicolin H biosynthetic pathway. This is NADH-dependent flavin oxidoreductase iliE from Hypocrea jecorina (strain QM6a) (Trichoderma reesei).